The primary structure comprises 335 residues: MSLLQPMRDMAAKMKTLCFKIMNFEHLDGSYTSESKLENGGHWAVRFVSSKTAKSTKRRLSVYLVCFPATDNPEWSISTSFAFRFLNSWGNSKTKISPLCTHTFTAKDNSKGASGFCAWDDIVTPNSGFLVNGVFTIEFDLSISRTTGYQIEKKDHTSFLADGKLIVEDQTIDVCLALLADNSPVLYDMIYNENPGQTEFEIFDFTYDSILGMVSILQLDEFKVNVRNYRDLLELGQRYQIVAVMDQCEEFLLRTKKVSIETKLKLSETFQLHFLQFRTIERIQCMERLEAILDENIDIEDKTYEALLEKMKQLKSQEEKESCSCKKKHCGRSRV.

One can recognise an MATH domain in the interval 14–141 (MKTLCFKIMN…NGVFTIEFDL (128 aa)). The BTB domain occupies 161–226 (ADGKLIVEDQ…LQLDEFKVNV (66 aa)).

The polypeptide is BTB and MATH domain-containing protein 39 (Caenorhabditis briggsae).